A 122-amino-acid polypeptide reads, in one-letter code: UPF0382 membrane protein SAB0533 (122 aa).

Helical transmembrane passes span 3-23 (LFII…AFGA), 46-66 (MYHG…SINV), 69-89 (AGWL…ILVL), and 98-118 (ITPI…IATF).

Belongs to the UPF0382 family.

Its subcellular location is the cell membrane. This is UPF0382 membrane protein SAB0533 from Staphylococcus aureus (strain bovine RF122 / ET3-1).